The sequence spans 208 residues: Thymidylate kinase (208 aa).

An ATP-binding site is contributed by 10 to 17; that stretch reads GPEGSGKT.

This sequence belongs to the thymidylate kinase family.

It carries out the reaction dTMP + ATP = dTDP + ADP. Phosphorylation of dTMP to form dTDP in both de novo and salvage pathways of dTTP synthesis. The chain is Thymidylate kinase from Bacillus cereus (strain Q1).